We begin with the raw amino-acid sequence, 448 residues long: Tubulin alpha-5 chain (448 aa).

Residues 1 to 4 (MREC) carry the MREC motif motif. Gln11 is a GTP binding site. Position 40 is an N6-acetyllysine (Lys40). Residues Glu71, Ser140, Gly144, Thr145, Thr179, Asn206, and Asn228 each coordinate GTP. Residue Glu71 coordinates Mg(2+). Glu254 is a catalytic residue.

It belongs to the tubulin family. In terms of assembly, dimer of alpha and beta chains. A typical microtubule is a hollow water-filled tube with an outer diameter of 25 nm and an inner diameter of 15 nM. Alpha-beta heterodimers associate head-to-tail to form protofilaments running lengthwise along the microtubule wall with the beta-tubulin subunit facing the microtubule plus end conferring a structural polarity. Microtubules usually have 13 protofilaments but different protofilament numbers can be found in some organisms and specialized cells. Mg(2+) is required as a cofactor. In terms of processing, some glutamate residues at the C-terminus are polyglycylated, resulting in polyglycine chains on the gamma-carboxyl group. Glycylation is mainly limited to tubulin incorporated into axonemes (cilia and flagella) whereas glutamylation is prevalent in neuronal cells, centrioles, axonemes, and the mitotic spindle. Both modifications can coexist on the same protein on adjacent residues, and lowering polyglycylation levels increases polyglutamylation, and reciprocally. The precise function of polyglycylation is still unclear. Post-translationally, some glutamate residues at the C-terminus are polyglutamylated, resulting in polyglutamate chains on the gamma-carboxyl group. Polyglutamylation plays a key role in microtubule severing by spastin (SPAST). SPAST preferentially recognizes and acts on microtubules decorated with short polyglutamate tails: severing activity by SPAST increases as the number of glutamates per tubulin rises from one to eight, but decreases beyond this glutamylation threshold. Acetylation of alpha chains at Lys-40 is located inside the microtubule lumen. This modification has been correlated with increased microtubule stability, intracellular transport and ciliary assembly.

Its subcellular location is the cytoplasm. The protein localises to the cytoskeleton. It catalyses the reaction GTP + H2O = GDP + phosphate + H(+). Functionally, tubulin is the major constituent of microtubules, a cylinder consisting of laterally associated linear protofilaments composed of alpha- and beta-tubulin heterodimers. Microtubules grow by the addition of GTP-tubulin dimers to the microtubule end, where a stabilizing cap forms. Below the cap, tubulin dimers are in GDP-bound state, owing to GTPase activity of alpha-tubulin. This Gallus gallus (Chicken) protein is Tubulin alpha-5 chain.